We begin with the raw amino-acid sequence, 890 residues long: V-type proton ATPase subunit a, Golgi isoform (890 aa).

Met1 is modified (N-acetylmethionine). Over 1–450 the chain is Cytoplasmic; that stretch reads MNQEEAIFRS…DAYGIATYKE (450 aa). Positions 113-154 form a coiled coil; the sequence is LENVNDMVKEITDCESRARQLDESLDSLRSKLNDLLEQRQVI. Residues Ser223 and Ser228 each carry the phosphoserine modification. The stretch at 297–347 forms a coiled coil; it reads LKKVKRVIDSLNGKIVSLNTRSSELVDTLNRQIDDLQRILDTTEQTLHTEL. Residues 451–469 form a helical membrane-spanning segment; that stretch reads INAGLATVVTFPFMFAIMF. Residues 470–471 are Vacuolar-facing; it reads GD. Residues 472–488 form a helical membrane-spanning segment; it reads MGHGFILFLMALFLVLN. Over 489-502 the chain is Cytoplasmic; that stretch reads ERKFGAMHRDEIFD. A helical membrane pass occupies residues 503–532; the sequence is MAFTGRYVLLLMGAFSVYTGLLYNDIFSKS. Topologically, residues 533 to 580 are vacuolar; it reads MTIFKSGWQWPSTFRKGESIEAKKTGVYPFGLDFAWHGTDNGLLFSNS. Residues 581–600 traverse the membrane as a helical segment; sequence YKMKLSILMGYAHMTYSFMF. At 601-618 the chain is on the cytoplasmic side; that stretch reads SYINYRAKNSKVDIIGNF. A helical transmembrane segment spans residues 619–639; it reads IPGLVFMQSIFGYLSWAIVYK. At 640–682 the chain is on the vacuolar side; sequence WSKDWIKDDKPAPGLLNMLINMFLAPGTIDDQLYSGQAKLQVV. The helical transmembrane segment at 683-702 threads the bilayer; it reads LLLAALVCVPWLLLYKPLTL. Over 703–779 the chain is Cytoplasmic; the sequence is RRLNKNGGGG…DVMIHQVIHT (77 aa). Residues 780-804 traverse the membrane as a helical segment; that stretch reads IEFCLNCISHTASYLRLWALSLAHA. At 805–828 the chain is on the vacuolar side; it reads QLSSVLWDMTISNAFSSKNSGSPL. The helical transmembrane segment at 829–867 threads the bilayer; the sequence is AVMKVVFLFAMWFVLTVCILVFMEGTSAMLHALRLHWVE. Residues 868–890 lie on the Cytoplasmic side of the membrane; sequence AMSKFFEGEGYAYEPFSFRAIIE.

This sequence belongs to the V-ATPase 116 kDa subunit family. In terms of assembly, V-ATPase is a heteromultimeric enzyme composed of a peripheral catalytic V1 complex (components A to H) attached to an integral membrane V0 proton pore complex (components: a, c, c', c'', d, e, f and VOA1). Glycosylated.

The protein localises to the endosome membrane. It localises to the golgi apparatus membrane. In terms of biological role, subunit of the V0 complex of vacuolar(H+)-ATPase (V-ATPase), a multisubunit enzyme composed of a peripheral complex (V1) that hydrolyzes ATP and a membrane integral complex (V0) that translocates protons. V-ATPase is responsible for acidifying and maintaining the pH of intracellular compartments. Is present only in Golgi- and endosome-residing V-ATPase complexes; enzymes containing this subunit have a 4-fold lower ratio of proton transport to ATP hydrolysis than complexes containing the vacuolar isoform and do not dissociate V1 and V0 in response to glucose depletion. This Saccharomyces cerevisiae (strain ATCC 204508 / S288c) (Baker's yeast) protein is V-type proton ATPase subunit a, Golgi isoform (STV1).